Reading from the N-terminus, the 148-residue chain is Nucleoside diphosphate kinase (148 aa).

Residues Lys-9, Phe-57, Arg-85, Thr-91, Arg-102, and Asn-112 each coordinate ATP. Position 91 is a phosphothreonine (Thr-91). The active-site Pros-phosphohistidine intermediate is His-115. Position 122 is a phosphoserine (Ser-122).

It belongs to the NDK family. As to quaternary structure, homotetramer. Requires Mg(2+) as cofactor.

It localises to the cytoplasm. The catalysed reaction is a 2'-deoxyribonucleoside 5'-diphosphate + ATP = a 2'-deoxyribonucleoside 5'-triphosphate + ADP. It catalyses the reaction a ribonucleoside 5'-diphosphate + ATP = a ribonucleoside 5'-triphosphate + ADP. In terms of biological role, major role in the synthesis of nucleoside triphosphates other than ATP. The ATP gamma phosphate is transferred to the NDP beta phosphate via a ping-pong mechanism, using a phosphorylated active-site intermediate. This Bacillus cereus (strain ATCC 14579 / DSM 31 / CCUG 7414 / JCM 2152 / NBRC 15305 / NCIMB 9373 / NCTC 2599 / NRRL B-3711) protein is Nucleoside diphosphate kinase.